The primary structure comprises 466 residues: 3-isopropylmalate dehydratase large subunit (466 aa).

3 residues coordinate [4Fe-4S] cluster: Cys347, Cys407, and Cys410.

Belongs to the aconitase/IPM isomerase family. LeuC type 1 subfamily. In terms of assembly, heterodimer of LeuC and LeuD. Requires [4Fe-4S] cluster as cofactor.

The enzyme catalyses (2R,3S)-3-isopropylmalate = (2S)-2-isopropylmalate. It participates in amino-acid biosynthesis; L-leucine biosynthesis; L-leucine from 3-methyl-2-oxobutanoate: step 2/4. Its function is as follows. Catalyzes the isomerization between 2-isopropylmalate and 3-isopropylmalate, via the formation of 2-isopropylmaleate. In Shigella boydii serotype 4 (strain Sb227), this protein is 3-isopropylmalate dehydratase large subunit.